A 1002-amino-acid polypeptide reads, in one-letter code: Protein SMAX1-LIKE 7 (1002 aa).

One can recognise a Clp R domain in the interval 8-185; that stretch reads ARQCLTEETA…DVLHPPVTSQ (178 aa). 2 repeat regions span residues 12 to 86 and 103 to 185; these read LTEE…LDRL and VSNS…VTSQ. An EAR motif is present at residues 854 to 858; that stretch reads LDLNL.

This sequence belongs to the ClpA/ClpB family. Interacts with TPL/TPR in an EAR-motif dependent manner. Interacts with TPL, TPR1, TPR2 and TPR4. Interacts with MAX2 and TPR2. Interacts with D14. The interaction with D14 occurs in the presence of (2'R) stereoisomers of strigolactones, but not (2'S) stereoisomers. Ubiquitinated upon strigolactone treatment. Strigolactone, but not karrikin, triggers rapid SCF(MAX2)-dependent degradation. As to expression, expressed in axillary branches and roots. Detected in seedlings and leaves. Expressed in the primary rosette buds and expanding leaves of adult rosettes, the vasculature of the hypocotyls, cotyledons, and mature roots, and in the midvein and petioles of young leaves.

It is found in the nucleus. In terms of biological role, probable component of a transcriptional corepressor complex involved in branching control. Regulates cotyledon expansion and lateral root growth, but not germination or hypocotyl elongation. Promotes auxin transport and PIN1 accumulation in the stem and represses BRC1/TCP18 expression in axillary buds. The chain is Protein SMAX1-LIKE 7 from Arabidopsis thaliana (Mouse-ear cress).